Consider the following 144-residue polypeptide: Snake venom vascular endothelial growth factor toxin cratrin (144 aa).

An N-terminal signal peptide occupies residues 1 to 24; sequence MAVYLLAVAILFCIQGWPSGTVQG. Q25 is modified (pyrrolidone carboxylic acid). Intrachain disulfides connect C38/C80, C69/C115, and C73/C117. A disordered region spans residues 119–144; the sequence is PRSTVNNGKRKKNPKEGEPRAKFPLV. Positions 132–144 are enriched in basic and acidic residues; it reads PKEGEPRAKFPLV.

This sequence belongs to the PDGF/VEGF growth factor family. Snake venom VEGF subfamily. Homodimer; disulfide-linked. Interacts with VEGF receptor-1 (FLT1) with a high affinity, whereas it binds to VEGF receptor-2 (KDR) with a low affinity. Does not bind VEGF receptor-3 (FLT4). Expressed by the venom gland.

The protein localises to the secreted. Snake venom VEGFs that may contribute to venom dispersion and prey subjugation by inducing vascular permeability and hypotension. This protein induces an increase in capillary permeability after intradermal injection, as well as a drastic hypotensive effect after intravenous injection. The hypotension is mediated by nitric oxide (NO), which is produced by VEGF-activated endothelium NO synthase. Also induces angiogenesis in vitro. Like other crotalid VEGFs, this protein interacts with VEGF receptor-1 (FLT1) with a high affinity, whereas it binds to VEGF receptor-2 (KDR) with a low affinity. The chain is Snake venom vascular endothelial growth factor toxin cratrin from Crotalus atrox (Western diamondback rattlesnake).